Reading from the N-terminus, the 208-residue chain is Non-specific lipid transfer protein GPI-anchored 4 (208 aa).

Positions 1 to 25 (MKQSLLLSFVLLLLSSSSLVTPIHA) are cleaved as a signal peptide. Asn-27, Asn-67, and Asn-105 each carry an N-linked (GlcNAc...) asparagine glycan. 4 disulfides stabilise this stretch: Cys-48–Cys-91, Cys-58–Cys-75, Cys-76–Cys-116, and Cys-89–Cys-125. The disordered stretch occupies residues 136 to 181 (GASPVSPSAGAPTTSPSAAKSPETSATSPSSDETPSMTAPSPSSSG). Ser-179 carries GPI-anchor amidated serine lipidation. Positions 180 to 208 (SGTNILSVPALTIVFVIVSSVAYISAFSN) are cleaved as a propeptide — removed in mature form.

This sequence belongs to the plant LTP family. In terms of tissue distribution, confined to the anthers and stamen of the inflorescence, especially in pollen.

It localises to the cell membrane. Functionally, lipid transfer protein involved in seed and ovule maturation and development, probably by regulating the fatty acids homeostasis during suberin and sporopollenin biosynthesis or deposition. This Arabidopsis thaliana (Mouse-ear cress) protein is Non-specific lipid transfer protein GPI-anchored 4.